We begin with the raw amino-acid sequence, 718 residues long: Probable GTP diphosphokinase RSH2, chloroplastic (718 aa).

Residues 1–68 constitute a chloroplast transit peptide; sequence MSVPAIAVYT…LFSSPTAAPR (68 aa). Residues 9-48 form a disordered region; sequence YTSPPGAVYTSSSSSELEASSRGSAPCATAAPPSPASSHR. The segment covering 19-39 has biased composition (low complexity); sequence SSSSSELEASSRGSAPCATAA. Residues 243 to 347 form the HD domain; that stretch reads YLQHCVETAV…IKLADRLHNM (105 aa).

It belongs to the RelA/SpoT family.

It is found in the plastid. It localises to the chloroplast. It carries out the reaction GTP + ATP = guanosine 3'-diphosphate 5'-triphosphate + AMP. Functionally, probable ppGpp (guanosine 3'-diphosphate 5'-diphosphate) synthetase that may be involved in a rapid plant ppGpp-mediated response to pathogens and other stresses. The protein is Probable GTP diphosphokinase RSH2, chloroplastic (RSH2) of Oryza sativa subsp. japonica (Rice).